We begin with the raw amino-acid sequence, 455 residues long: MSAIMRIHAREVLDSRGNPTIQIEVESEYGYGSAMVPSGASTGEKEAKELRDKGTKYEKNWYGGKGVQTAVDNVNNIIAPKIEGYDVLDQRAIDYEMIKLDGTEFKEKLGANAILGVSLAVAKAAADELNIPLYRYVGGTNGFKLPVPMLNVINGGEHASNTVDFQEFLIMPIGAKTFKEAMQVANKVFHNLKDLLASQGHSTAVGDEGGFAPDLKSHEEVLDFIVSAIKKAGYEPSKKGDKAVAIAIDAASSELFDKKSKTYTFKKLKKAILTKQPGFENLGKVKVEYSSDELVEYFKDLFKKYPIISLEDGFSEHDWDAFTKLNNSVGATHQIMGDDLVTTNPKFIKKAIETKAINSVLIKLNQIGTLSETMDAIEMAHKAGMTCVVSHRSGETEDTTIADLAVALNTGQIKTGSISRTDRVAKYNRLLVIEEELGIVASYEGIQVFHNLKVK.

A (2R)-2-phosphoglycerate-binding site is contributed by Q166. E208 functions as the Proton donor in the catalytic mechanism. Mg(2+)-binding residues include D249, E311, and D338. (2R)-2-phosphoglycerate is bound by residues K363, R392, S393, and K414. Catalysis depends on K363, which acts as the Proton acceptor.

Belongs to the enolase family. Mg(2+) serves as cofactor.

It is found in the cytoplasm. The protein resides in the secreted. Its subcellular location is the cell surface. The enzyme catalyses (2R)-2-phosphoglycerate = phosphoenolpyruvate + H2O. Its pathway is carbohydrate degradation; glycolysis; pyruvate from D-glyceraldehyde 3-phosphate: step 4/5. Catalyzes the reversible conversion of 2-phosphoglycerate (2-PG) into phosphoenolpyruvate (PEP). It is essential for the degradation of carbohydrates via glycolysis. The chain is Enolase from Mycoplasma mobile (strain ATCC 43663 / 163K / NCTC 11711) (Mesomycoplasma mobile).